The sequence spans 58 residues: Preprotein translocase subunit SecG (58 aa).

At 1–33 the chain is on the cytoplasmic side; the sequence is MARRRKYEGLNPFVAAGLIKFSEEGELEKIKLS. A helical membrane pass occupies residues 34–55; the sequence is PKAAIAISLAIIAAILALNLLL. At 56–58 the chain is on the extracellular side; that stretch reads PPP.

The protein belongs to the SEC61-beta family. As to quaternary structure, component of the protein translocase complex. Heterotrimer consisting of alpha (SecY), beta (SecG) and gamma (SecE) subunits. Can form oligomers of the heterotrimer.

It is found in the cell membrane. In terms of biological role, involved in protein export. The function of the beta subunit is unknown, but it may be involved in stabilization of the trimeric complex. The sequence is that of Preprotein translocase subunit SecG from Pyrobaculum calidifontis (strain DSM 21063 / JCM 11548 / VA1).